Reading from the N-terminus, the 372-residue chain is L-selectin (372 aa).

The N-terminal stretch at 1 to 28 (MIFPRKCQSTQRDLWNIFKLWGWTMLCC) is a signal peptide. Positions 29 to 38 (DFLAHHGTDC) are excised as a propeptide. The Extracellular portion of the chain corresponds to 39-332 (WTYHYSENPM…FSMIKEGDYN (294 aa)). Positions 55–155 (RFCRENYTDL…ACHKPKAALC (101 aa)) constitute a C-type lectin domain. Intrachain disulfides connect Cys-57-Cys-155, Cys-128-Cys-147, Cys-128-Cys-160, Cys-160-Cys-171, Cys-165-Cys-180, Cys-182-Cys-191, Cys-197-Cys-241, Cys-227-Cys-254, Cys-259-Cys-303, and Cys-289-Cys-316. N-linked (GlcNAc...) asparagine glycosylation is found at Asn-60 and Asn-104. 5 residues coordinate Ca(2+): Glu-118, Asn-120, Glu-126, Asn-143, and Asp-144. In terms of domain architecture, EGF-like spans 156-192 (YTASCQPWSCSGHGECVEIINNYTCNCDVGYYGPQCQ). N-linked (GlcNAc...) asparagine glycosylation occurs at Asn-177. Sushi domains follow at residues 195-256 (IQCE…TCQV) and 257-318 (IQCE…ICQK). N-linked (GlcNAc...) asparagine glycosylation is found at Asn-226, Asn-232, Asn-246, and Asn-271. A helical transmembrane segment spans residues 333 to 355 (PLFIPVAVIVTAFSGLAFIIWLA). At 356–372 (RRLKKGKKSKKSMDDPY) the chain is on the cytoplasmic side.

The protein belongs to the selectin/LECAM family. Interaction with SELPLG/PSGL1 and PODXL2 is required for promoting recruitment and rolling of leukocytes. This interaction is dependent on the sialyl Lewis X glycan modification of SELPLG and PODXL2, and tyrosine sulfation modifications of SELPLG. Sulfation on 'Tyr-51' of SELPLG is important for L-selectin binding. In terms of processing, N-glycosylated.

Its subcellular location is the cell membrane. Its function is as follows. Calcium-dependent lectin that mediates cell adhesion by binding to glycoproteins on neighboring cells. Mediates the adherence of lymphocytes to endothelial cells of high endothelial venules in peripheral lymph nodes. Promotes initial tethering and rolling of leukocytes in endothelia. This Papio hamadryas (Hamadryas baboon) protein is L-selectin (SELL).